A 389-amino-acid chain; its full sequence is Sulfate adenylyltransferase (389 aa).

The protein belongs to the sulfate adenylyltransferase family.

The enzyme catalyses sulfate + ATP + H(+) = adenosine 5'-phosphosulfate + diphosphate. Its pathway is sulfur metabolism; hydrogen sulfide biosynthesis; sulfite from sulfate: step 1/3. The polypeptide is Sulfate adenylyltransferase (Microcystis aeruginosa (strain NIES-843 / IAM M-2473)).